The sequence spans 160 residues: Transcriptional repressor NrdR (160 aa).

A zinc finger lies at 3–34; that stretch reads CPSCQNTDSRVLESRAADGGRSVRRRRECLNC. In terms of domain architecture, ATP-cone spans 49–139; sequence ITVIKRNGNR…VYRQFRGIDD (91 aa).

Belongs to the NrdR family. Requires Zn(2+) as cofactor.

Negatively regulates transcription of bacterial ribonucleotide reductase nrd genes and operons by binding to NrdR-boxes. This Synechococcus sp. (strain CC9605) protein is Transcriptional repressor NrdR.